We begin with the raw amino-acid sequence, 1141 residues long: Probable ubiquitin carboxyl-terminal hydrolase 2 (1141 aa).

Threonine 112 bears the Phosphothreonine mark. Serine 113 bears the Phosphoserine mark. Threonine 115 carries the post-translational modification Phosphothreonine. Residues 614–1124 (IGLENTGNLC…NPYMLTYIRK (511 aa)) form the USP domain. Cysteine 623 acts as the Nucleophile in catalysis. Threonine 721 is modified (phosphothreonine). Position 722 is a phosphoserine (serine 722). Residues 748–770 (EEQAQGLEQEQGQDEAKSPAEQS) are disordered. The active-site Proton acceptor is histidine 1076.

The protein belongs to the peptidase C19 family.

The enzyme catalyses Thiol-dependent hydrolysis of ester, thioester, amide, peptide and isopeptide bonds formed by the C-terminal Gly of ubiquitin (a 76-residue protein attached to proteins as an intracellular targeting signal).. The protein is Probable ubiquitin carboxyl-terminal hydrolase 2 (ubp2) of Schizosaccharomyces pombe (strain 972 / ATCC 24843) (Fission yeast).